Consider the following 800-residue polypeptide: Receptor-like protein 47 (800 aa).

The first 31 residues, Met-1–Ala-31, serve as a signal peptide directing secretion. At Lys-32–Gln-759 the chain is on the extracellular side. 2 N-linked (GlcNAc...) asparagine glycosylation sites follow: Asn-66 and Asn-102. 23 LRR repeats span residues Gln-109–Asn-131, Lys-133–Leu-156, Ser-157–Asn-179, Leu-190–Ser-213, Leu-214–Ile-238, Ser-240–Ser-262, Pro-263–Pro-288, Tyr-294–Pro-311, Ser-312–Gln-334, Thr-335–Leu-358, Glu-360–Gly-383, Arg-385–Val-406, Val-407–Leu-430, Asp-431–Asn-453, His-455–His-477, Leu-479–Cys-500, Asp-502–Leu-523, Leu-524–Phe-550, Ser-551–Gly-574, Phe-621–Leu-645, Lys-646–Leu-669, Ser-670–Leu-693, and Phe-695–Thr-718. Asn-155 carries an N-linked (GlcNAc...) asparagine glycan. An N-linked (GlcNAc...) asparagine glycan is attached at Asn-210. A glycan (N-linked (GlcNAc...) asparagine) is linked at Asn-259. N-linked (GlcNAc...) asparagine glycans are attached at residues Asn-323 and Asn-333. Asn-365 is a glycosylation site (N-linked (GlcNAc...) asparagine). Asn-442, Asn-465, Asn-499, and Asn-514 each carry an N-linked (GlcNAc...) asparagine glycan. Asn-668 carries N-linked (GlcNAc...) asparagine glycosylation. N-linked (GlcNAc...) asparagine glycosylation is present at Asn-700. The helical transmembrane segment at Val-760 to Ile-780 threads the bilayer. Residues Gly-781 to Thr-800 are Cytoplasmic-facing.

The protein belongs to the RLP family.

Its subcellular location is the cell membrane. The sequence is that of Receptor-like protein 47 from Arabidopsis thaliana (Mouse-ear cress).